The primary structure comprises 319 residues: Ferrochelatase (319 aa).

Fe cation contacts are provided by His-192 and Glu-271.

The protein belongs to the ferrochelatase family.

The protein localises to the cytoplasm. It carries out the reaction heme b + 2 H(+) = protoporphyrin IX + Fe(2+). Its pathway is porphyrin-containing compound metabolism; protoheme biosynthesis; protoheme from protoporphyrin-IX: step 1/1. Catalyzes the ferrous insertion into protoporphyrin IX. The protein is Ferrochelatase of Geotalea daltonii (strain DSM 22248 / JCM 15807 / FRC-32) (Geobacter daltonii).